The following is a 446-amino-acid chain: Histidine--tRNA ligase (446 aa).

The interval 403–422 (TASVKPLRGTGDDGEKSVQQ) is disordered.

This sequence belongs to the class-II aminoacyl-tRNA synthetase family. As to quaternary structure, homodimer.

The protein localises to the cytoplasm. It catalyses the reaction tRNA(His) + L-histidine + ATP = L-histidyl-tRNA(His) + AMP + diphosphate + H(+). This Burkholderia thailandensis (strain ATCC 700388 / DSM 13276 / CCUG 48851 / CIP 106301 / E264) protein is Histidine--tRNA ligase.